Here is a 474-residue protein sequence, read N- to C-terminus: Dihydrolipoyl dehydrogenase (474 aa).

FAD-binding positions include 39–47 (EKDAYGGTC), K56, and A118. C47 and C52 are oxidised to a cystine. NAD(+) contacts are provided by residues 186–190 (GGGYI), E209, and 275–278 (AVGR). 2 residues coordinate FAD: D318 and A326. H450 functions as the Proton acceptor in the catalytic mechanism.

It belongs to the class-I pyridine nucleotide-disulfide oxidoreductase family. In terms of assembly, homodimer. It depends on FAD as a cofactor.

It is found in the cytoplasm. The catalysed reaction is N(6)-[(R)-dihydrolipoyl]-L-lysyl-[protein] + NAD(+) = N(6)-[(R)-lipoyl]-L-lysyl-[protein] + NADH + H(+). The protein is Dihydrolipoyl dehydrogenase (lpdA) of Halobacterium salinarum (strain ATCC 700922 / JCM 11081 / NRC-1) (Halobacterium halobium).